The primary structure comprises 184 residues: Tumor necrosis factor alpha-induced protein 8-like protein 2 (184 aa).

Residue Ser3 is modified to Phosphoserine.

Belongs to the TNFAIP8 family. TNFAIP8L2 subfamily. In terms of assembly, may interact with CASP8; however, such result is unclear since could not reproduce the interaction with CASP8. Interacts with RAC1. In terms of processing, phosphorylated by TAK1/MAP3K7; this phosphorylation triggers association with BTRC and subsequent ubiquitination and degradation. Post-translationally, ubiquitinated in a BTRC-depdent manner; leading to degradation mediated through the proteasome pathway.

It is found in the cytoplasm. The protein resides in the nucleus. The protein localises to the lysosome. In terms of biological role, acts as a negative regulator of innate and adaptive immunity by maintaining immune homeostasis. Plays a regulatory role in the Toll-like signaling pathway by determining the strength of LPS-induced signaling and gene expression. Inhibits TCR-mediated T-cell activation and negatively regulate T-cell function to prevent hyperresponsiveness. Also inhibits autolysosome formation via negatively modulating MTOR activation by interacting with RAC1 and promoting the disassociation of the RAC1-MTOR complex. Plays an essential role in NK-cell biology by acting as a checkpoint and displaying an expression pattern correlating with NK-cell maturation process and by negatively regulating NK-cell maturation and antitumor immunity. Mechanistically, suppresses IL-15-triggered mTOR activity in NK-cells. This Rattus norvegicus (Rat) protein is Tumor necrosis factor alpha-induced protein 8-like protein 2 (Tnfaip8l2).